The sequence spans 20 residues: T cell receptor alpha joining 42 (20 aa).

Residues 1-20 (YGGSQGNLIFGKGTKLSVKP) form a disordered region.

Alpha-beta TR is a heterodimer composed of an alpha and beta chain; disulfide-linked. The alpha-beta TR is associated with the transmembrane signaling CD3 coreceptor proteins to form the TR-CD3 (TcR or TCR). The assembly of alpha-beta TR heterodimers with CD3 occurs in the endoplasmic reticulum where a single alpha-beta TR heterodimer associates with one CD3D-CD3E heterodimer, one CD3G-CD3E heterodimer and one CD247 homodimer forming a stable octameric structure. CD3D-CD3E and CD3G-CD3E heterodimers preferentially associate with TR alpha and TR beta chains, respectively. The association of the CD247 homodimer is the last step of TcR assembly in the endoplasmic reticulum and is required for transport to the cell surface.

Its subcellular location is the cell membrane. In terms of biological role, j region of the variable domain of T cell receptor (TR) alpha chain that participates in the antigen recognition. Alpha-beta T cell receptors are antigen specific receptors which are essential to the immune response and are present on the cell surface of T lymphocytes. Recognize peptide-major histocompatibility (MH) (pMH) complexes that are displayed by antigen presenting cells (APC), a prerequisite for efficient T cell adaptive immunity against pathogens. Binding of alpha-beta TR to pMH complex initiates TR-CD3 clustering on the cell surface and intracellular activation of LCK that phosphorylates the ITAM motifs of CD3G, CD3D, CD3E and CD247 enabling the recruitment of ZAP70. In turn, ZAP70 phosphorylates LAT, which recruits numerous signaling molecules to form the LAT signalosome. The LAT signalosome propagates signal branching to three major signaling pathways, the calcium, the mitogen-activated protein kinase (MAPK) kinase and the nuclear factor NF-kappa-B (NF-kB) pathways, leading to the mobilization of transcription factors that are critical for gene expression and essential for T cell growth and differentiation. The T cell repertoire is generated in the thymus, by V-(D)-J rearrangement. This repertoire is then shaped by intrathymic selection events to generate a peripheral T cell pool of self-MH restricted, non-autoaggressive T cells. Post-thymic interaction of alpha-beta TR with the pMH complexes shapes TR structural and functional avidity. The polypeptide is T cell receptor alpha joining 42 (Homo sapiens (Human)).